We begin with the raw amino-acid sequence, 1844 residues long: ATPase family AAA domain-containing protein 5 (1844 aa).

Position 44 is a phosphoserine (S44). Residue K127 forms a Glycyl lysine isopeptide (Lys-Gly) (interchain with G-Cter in SUMO2) linkage. Polar residues predominate over residues 178-199; that stretch reads QPNTMTSLQNSKKVNPKQGTTK. The segment at 178–204 is disordered; it reads QPNTMTSLQNSKKVNPKQGTTKNDFKK. Phosphoserine occurs at positions 219, 306, 311, 354, and 369. Positions 368 to 384 are interaction with WDR48; sequence KSNVVIQEEELELAVLE. Disordered regions lie at residues 477 to 499, 580 to 623, and 658 to 700; these read KLKK…REGN, ESEA…NSQL, and KFTR…SKNI. 2 stretches are compositionally biased toward polar residues: residues 580–592 and 599–608; these read ESEA…STPK and RISSTPTTET. Residues S602, S614, and S621 each carry the phosphoserine modification. A compositionally biased stretch (basic residues) spans 664–673; that stretch reads TPKKSKKKSN. Residues 685–700 show a composition bias toward polar residues; that stretch reads GFTSQIRKASNTSKNI. At S817 the chain carries Phosphoserine. 2 stretches are compositionally biased toward basic and acidic residues: residues 987-1032 and 1092-1106; these read LEAD…ELSK and RQNL…HEDF. Disordered regions lie at residues 987–1047 and 1092–1118; these read LEAD…SKDS and RQNL…SSDD. S1116 is subject to Phosphoserine. 1132 to 1139 is an ATP binding site; that stretch reads GPTGVGKT. Disordered regions lie at residues 1203–1235 and 1272–1292; these read KKIS…LPPK and ITQT…GAEE. The segment covering 1272-1285 has biased composition (polar residues); that stretch reads ITQTKSTNATNSNV. The short motif at 1428–1432 is the LXCXE motif element; sequence LVCSE. Residues 1591 to 1635 are disordered; the sequence is SLSSVSSSSNAEESKTGDEESKARDKGNNPETKKSIPCPPKTTAG. The segment covering 1602–1624 has biased composition (basic and acidic residues); sequence EESKTGDEESKARDKGNNPETKK. Positions 1630–1719 are interaction with RAD51 and RFC5; that stretch reads PKTTAGKKCS…AAAEALSFTK (90 aa).

Belongs to the AAA ATPase family. In terms of assembly, component of a heteropentameric replication factor ATAD5 RFC-like complex composed of one large subunit (ATAD5) and four small subunits (RFC2, RFC3, RFC4 and RFC5). Within the ATAD5 RFC-like complex, interacts with RFC2, RFC4 and RFC5. Within the ATAD5 RFC-like complex, interacts directly via-N terminal with RAD51; the interactions is enhanced under replication stress. Interacts with RB1 predominantly in G1 phase via its LXCXE motif. Interacts with RAD9A in growing cells. The interaction with RAD9A is reduced after exposure to DNA replication-inhibiting agents. Interacts with BRD4. Interacts with PCNA. Interacts with deubiquitinating enzyme USP1, and its associated factor, WDR48. ATR may stimulate the RAD9A dissociation.

The protein resides in the nucleus. Its function is as follows. Has an important role in DNA replication and in maintaining genome integrity during replication stress. Involved in a RAD9A-related damage checkpoint, a pathway that is important in determining whether DNA damage is compatible with cell survival or whether it requires cell elimination by apoptosis. Modulates the RAD9A interaction with BCL2 and thereby induces DNA damage-induced apoptosis. Promotes PCNA deubiquitination by recruiting the ubiquitin-specific protease 1 (USP1) and WDR48 thereby down-regulating the error-prone damage bypass pathway. As component of the ATAD5 RFC-like complex, regulates the function of the DNA polymerase processivity factor PCNA by unloading the ring-shaped PCNA homotrimer from DNA after replication during the S phase of the cell cycle. This seems to be dependent on its ATPase activity. Plays important roles in restarting stalled replication forks under replication stress, by unloading the PCNA homotrimer from DNA and recruiting RAD51 possibly through an ATR-dependent manner. Ultimately this enables replication fork regression, breakage, and eventual fork restart. Both the PCNA unloading activity and the interaction with WDR48 are required to efficiently recruit RAD51 to stalled replication forks. Promotes the generation of MUS81-mediated single-stranded DNA-associated breaks in response to replication stress, which is an alternative pathway to restart stalled/regressed replication forks. This Homo sapiens (Human) protein is ATPase family AAA domain-containing protein 5.